A 200-amino-acid polypeptide reads, in one-letter code: ATP-dependent Clp protease proteolytic subunit (200 aa).

The active-site Nucleophile is Ser105. His130 is a catalytic residue.

The protein belongs to the peptidase S14 family. Fourteen ClpP subunits assemble into 2 heptameric rings which stack back to back to give a disk-like structure with a central cavity, resembling the structure of eukaryotic proteasomes.

It is found in the cytoplasm. The enzyme catalyses Hydrolysis of proteins to small peptides in the presence of ATP and magnesium. alpha-casein is the usual test substrate. In the absence of ATP, only oligopeptides shorter than five residues are hydrolyzed (such as succinyl-Leu-Tyr-|-NHMec, and Leu-Tyr-Leu-|-Tyr-Trp, in which cleavage of the -Tyr-|-Leu- and -Tyr-|-Trp bonds also occurs).. In terms of biological role, cleaves peptides in various proteins in a process that requires ATP hydrolysis. Has a chymotrypsin-like activity. Plays a major role in the degradation of misfolded proteins. This Hydrogenovibrio crunogenus (strain DSM 25203 / XCL-2) (Thiomicrospira crunogena) protein is ATP-dependent Clp protease proteolytic subunit.